The chain runs to 478 residues: Glycogen synthase (478 aa).

Lysine 15 provides a ligand contact to ADP-alpha-D-glucose.

This sequence belongs to the glycosyltransferase 1 family. Bacterial/plant glycogen synthase subfamily.

It catalyses the reaction [(1-&gt;4)-alpha-D-glucosyl](n) + ADP-alpha-D-glucose = [(1-&gt;4)-alpha-D-glucosyl](n+1) + ADP + H(+). It functions in the pathway glycan biosynthesis; glycogen biosynthesis. Its function is as follows. Synthesizes alpha-1,4-glucan chains using ADP-glucose. In Actinobacillus pleuropneumoniae serotype 5b (strain L20), this protein is Glycogen synthase.